A 567-amino-acid polypeptide reads, in one-letter code: tRNA (uracil-O(2)-)-methyltransferase (567 aa).

Phosphoserine is present on serine 107.

This sequence belongs to the TRM44 family.

The protein resides in the cytoplasm. It carries out the reaction uridine(44) in tRNA(Ser) + S-adenosyl-L-methionine = 2'-O-methyluridine(44) in tRNA(Ser) + S-adenosyl-L-homocysteine + H(+). TRNA (uracil-O(2)-)-methyltransferase, which catalyzes the formation of O(2)-methyluracil at position 44 (Um44) in tRNA(Ser). The chain is tRNA (uracil-O(2)-)-methyltransferase (TRM44) from Saccharomyces cerevisiae (strain ATCC 204508 / S288c) (Baker's yeast).